Here is a 134-residue protein sequence, read N- to C-terminus: UPF0412 protein YaaI (134 aa).

The first 23 residues, methionine 1–alanine 23, serve as a signal peptide directing secretion.

The protein belongs to the UPF0412 family.

The protein is UPF0412 protein YaaI of Salmonella paratyphi B (strain ATCC BAA-1250 / SPB7).